Here is a 214-residue protein sequence, read N- to C-terminus: MVSLEARVREVKGKREARRLRRNGEVPAVVYGPATEPIPVKIKRSVLEKVFHTISEATPIQLIIKDDQGNTVSEKTVFLKMIQRDKVSETVVHLDFYEPTKGHRMRINVPLKVVGKPVGVEKGGFLEVFHEEIPVETDPDNVPQEIEVDVSSLDLGDVIYARDLKLPEGVKCLLGDEEVVVSVLVPKEVVIEETTEAEETAEPEVIRRKEEEEE.

The tract at residues T194 to E214 is disordered. A compositionally biased stretch (basic and acidic residues) spans E204–E214.

It belongs to the bacterial ribosomal protein bL25 family. CTC subfamily. Part of the 50S ribosomal subunit; part of the 5S rRNA/L5/L18/L25 subcomplex. Contacts the 5S rRNA. Binds to the 5S rRNA independently of L5 and L18.

Its function is as follows. This is one of the proteins that binds to the 5S RNA in the ribosome where it forms part of the central protuberance. The polypeptide is Large ribosomal subunit protein bL25 (Thermotoga petrophila (strain ATCC BAA-488 / DSM 13995 / JCM 10881 / RKU-1)).